The following is a 66-amino-acid chain: Large ribosomal subunit protein uL29 (66 aa).

The protein belongs to the universal ribosomal protein uL29 family. As to quaternary structure, part of the 50S ribosomal subunit.

The protein is Large ribosomal subunit protein uL29 (rpmC) of Bacillus subtilis (strain 168).